Reading from the N-terminus, the 291-residue chain is 33 kDa chaperonin (291 aa).

2 disulfide bridges follow: C237–C239 and C270–C273.

It belongs to the HSP33 family. Post-translationally, under oxidizing conditions two disulfide bonds are formed involving the reactive cysteines. Under reducing conditions zinc is bound to the reactive cysteines and the protein is inactive.

It is found in the cytoplasm. Redox regulated molecular chaperone. Protects both thermally unfolding and oxidatively damaged proteins from irreversible aggregation. Plays an important role in the bacterial defense system toward oxidative stress. The protein is 33 kDa chaperonin of Bacillus cytotoxicus (strain DSM 22905 / CIP 110041 / 391-98 / NVH 391-98).